The chain runs to 344 residues: Selenide, water dikinase (344 aa).

The active site involves Cys16. ATP-binding positions include Lys19 and 47 to 49 (SRD). Asp50 is a Mg(2+) binding site. Residues Asp67, Asp90, and 138 to 140 (GHS) each bind ATP. Asp90 is a binding site for Mg(2+). Mg(2+) is bound at residue Asp226.

It belongs to the selenophosphate synthase 1 family. Class I subfamily. In terms of assembly, homodimer. It depends on Mg(2+) as a cofactor.

The catalysed reaction is hydrogenselenide + ATP + H2O = selenophosphate + AMP + phosphate + 2 H(+). Synthesizes selenophosphate from selenide and ATP. In Pseudomonas putida (strain ATCC 47054 / DSM 6125 / CFBP 8728 / NCIMB 11950 / KT2440), this protein is Selenide, water dikinase.